Consider the following 243-residue polypeptide: Uba3-binding protein but1 (243 aa).

Residues 28 to 50 (KSTKKRRSSTKDEETRGMHPHIK) are disordered.

Homodimer. Interacts with but2 and uba3.

Its subcellular location is the nucleus. In terms of biological role, acts as a negative regulator of the NEDD8 pathway. Has a role in meiosis. The protein is Uba3-binding protein but1 (but1) of Schizosaccharomyces pombe (strain 972 / ATCC 24843) (Fission yeast).